The following is a 188-amino-acid chain: Elongation factor P (188 aa).

Residue K34 is modified to N6-(3,6-diaminohexanoyl)-5-hydroxylysine.

The protein belongs to the elongation factor P family. Is beta-lysylated on the epsilon-amino group of Lys-34 by the combined action of EpmA and EpmB, and then hydroxylated on the C5 position of the same residue by EpmC. Lysylation is critical for the stimulatory effect of EF-P on peptide-bond formation. The lysylation moiety would extend toward the peptidyltransferase center and stabilize the terminal 3-CCA end of the tRNA. The hydroxylation of the C5 position on Lys-34 would allow additional potential stabilizing hydrogen-bond interactions with the P-tRNA.

It localises to the cytoplasm. It functions in the pathway protein biosynthesis; polypeptide chain elongation. Involved in peptide bond synthesis. Alleviates ribosome stalling that occurs when 3 or more consecutive Pro residues or the sequence PPG is present in a protein, possibly by augmenting the peptidyl transferase activity of the ribosome. Modification of Lys-34 is required for alleviation. In Shigella boydii serotype 18 (strain CDC 3083-94 / BS512), this protein is Elongation factor P.